A 674-amino-acid polypeptide reads, in one-letter code: uncharacterized protein (674 aa).

The signal sequence occupies residues 1–24; the sequence is MKTLKALKIFIIVYISSVSLESFA. 2 helical membrane passes run 226–246 and 254–274; these read IIGAALILYTMFFAFNMALNK and ITLFIIKFLFVVYFSIGLEPL. A disordered region spans residues 363-384; sequence GNGPGGNNKPIPNFDPDSKKDR. Transmembrane regions (helical) follow at residues 409–429, 436–456, 469–489, and 562–582; these read IIILVAGIAFSVIFLSILLYF, CMITIYVMTYISPIFIPMVLF, VCISCALQPAVVAGFIALLIT, and VVSILAELLCVLVFSVIFYYF. Positions 624-674 are disordered; the sequence is SSVHAQGKSPVEDKPDIGSKRKDGVQQGEDSENSSGGELADLASGSGGGKL. Positions 633–647 are enriched in basic and acidic residues; sequence PVEDKPDIGSKRKDG.

This sequence belongs to the TrbL/VirB6 family.

It localises to the cell membrane. This is an uncharacterized protein from Rickettsia typhi (strain ATCC VR-144 / Wilmington).